Reading from the N-terminus, the 206-residue chain is Outer-membrane lipoprotein carrier protein (206 aa).

The signal sequence occupies residues 1–21; the sequence is MTRLLFVLVLSVCLLPVPVKA.

Belongs to the LolA family. In terms of assembly, monomer.

It is found in the periplasm. In terms of biological role, participates in the translocation of lipoproteins from the inner membrane to the outer membrane. Only forms a complex with a lipoprotein if the residue after the N-terminal Cys is not an aspartate (The Asp acts as a targeting signal to indicate that the lipoprotein should stay in the inner membrane). This chain is Outer-membrane lipoprotein carrier protein, found in Nitrosomonas europaea (strain ATCC 19718 / CIP 103999 / KCTC 2705 / NBRC 14298).